The sequence spans 143 residues: D-aminoacyl-tRNA deacylase (143 aa).

Residues 135 to 136 (GP) carry the Gly-cisPro motif, important for rejection of L-amino acids motif.

Belongs to the DTD family. In terms of assembly, homodimer.

The protein localises to the cytoplasm. The enzyme catalyses glycyl-tRNA(Ala) + H2O = tRNA(Ala) + glycine + H(+). It carries out the reaction a D-aminoacyl-tRNA + H2O = a tRNA + a D-alpha-amino acid + H(+). Its function is as follows. An aminoacyl-tRNA editing enzyme that deacylates mischarged D-aminoacyl-tRNAs. Also deacylates mischarged glycyl-tRNA(Ala), protecting cells against glycine mischarging by AlaRS. Acts via tRNA-based rather than protein-based catalysis; rejects L-amino acids rather than detecting D-amino acids in the active site. By recycling D-aminoacyl-tRNA to D-amino acids and free tRNA molecules, this enzyme counteracts the toxicity associated with the formation of D-aminoacyl-tRNA entities in vivo and helps enforce protein L-homochirality. The polypeptide is D-aminoacyl-tRNA deacylase (Mycolicibacterium gilvum (strain PYR-GCK) (Mycobacterium gilvum (strain PYR-GCK))).